A 181-amino-acid polypeptide reads, in one-letter code: Der GTPase-activating protein YihI (181 aa).

Positions 1 to 73 (MSRIKKARKP…DPRIGSKKPI (73 aa)) are disordered. The segment covering 22 to 32 (NRTDRDVESRE) has biased composition (basic and acidic residues). A compositionally biased stretch (basic residues) spans 33–42 (IKRKRKRKGL). Positions 55 to 67 (QARRNAQKKDPRI) are enriched in basic and acidic residues.

It belongs to the YihI family. Interacts with Der.

A GTPase-activating protein (GAP) that modifies Der/EngA GTPase function. May play a role in ribosome biogenesis. The chain is Der GTPase-activating protein YihI from Aliivibrio fischeri (strain ATCC 700601 / ES114) (Vibrio fischeri).